The sequence spans 244 residues: THO complex subunit 4A (244 aa).

The segment at 1–82 (MSTGLDMSLD…EDHRSGRSSA (82 aa)) is disordered. Position 2 is an N-acetylserine (S2). Positions 21-35 (GGAGPARGTGSGSGP) are enriched in gly residues. Basic and acidic residues predominate over residues 67 to 77 (MFSDRSEDHRS). An RRM domain is found at 88-165 (TKLYISNLDY…KPMKIEIVGT (78 aa)). The tract at residues 169–244 (TAAAPSGRPA…KYHSGDMETN (76 aa)) is disordered. Positions 187–211 (WRGGQGRGGQQRGGGRGGGGRGGGG) are enriched in gly residues. A compositionally biased stretch (basic and acidic residues) spans 220–244 (PAEKISAEDLDADLDKYHSGDMETN).

It belongs to the ALYREF family.

It localises to the nucleus. The protein localises to the nucleoplasm. The protein resides in the nucleolus. Functionally, export adapter involved in nuclear export of spliced and unspliced mRNA. In Arabidopsis thaliana (Mouse-ear cress), this protein is THO complex subunit 4A (ALY1).